Consider the following 487-residue polypeptide: Probable glutamate receptor (487 aa).

The N-terminal stretch at 1–23 (MDKGLHFIFCVVTAVLLLRESSQ) is a signal peptide. The Extracellular portion of the chain corresponds to 24–169 (TGAMRNDDAM…FFHFLAPFSK (146 aa)). N-linked (GlcNAc...) asparagine glycosylation is present at Asn-104. A helical membrane pass occupies residues 170-190 (ETWTGLLFAYVLTCVCLFLVA). Residues 191-235 (RLSPCEWNEPKNEENHFTFLNSLWFGAGALTLQGVTPRPKAFSVR) lie on the Cytoplasmic side of the membrane. Residues 236–256 (VIAAIWWLFTIALLAAYIANF) form a helical membrane-spanning segment. Over 257 to 419 (TALLSSGSEQ…EGWSPLQPQA (163 aa)) the chain is Extracellular. Residues 420-440 (LGGLFLTLAIGLALGVIAAMV) traverse the membrane as a helical segment. Over 441–487 (ELSNKSRHAAGHIKKSCCSIFTEEMCTRLRIKENTRQTQETSGRANA) the chain is Cytoplasmic.

Belongs to the glutamate-gated ion channel (TC 1.A.10.1) family.

It localises to the cell membrane. The protein localises to the postsynaptic cell membrane. Its function is as follows. Receptor for glutamate. L-glutamate acts as an excitatory neurotransmitter at many synapses in the central nervous system. The postsynaptic actions of Glu are mediated by a variety of receptors that are named according to their selective agonists. The polypeptide is Probable glutamate receptor (KBP) (Gallus gallus (Chicken)).